Reading from the N-terminus, the 437-residue chain is tRNA-2-methylthio-N(6)-dimethylallyladenosine synthase (437 aa).

One can recognise an MTTase N-terminal domain in the interval 1–115 (MKVYIETMGC…ISQVIHKEKA (115 aa)). [4Fe-4S] cluster is bound by residues C10, C46, C78, C148, C152, and C155. The 234-residue stretch at 134 to 367 (KKAQIRSLLN…QNRHKEILEE (234 aa)) folds into the Radical SAM core domain. Residues 370–436 (KLEVGKTHVV…KGRLIAAIKG (67 aa)) enclose the TRAM domain.

Belongs to the methylthiotransferase family. MiaB subfamily. Monomer. [4Fe-4S] cluster serves as cofactor.

Its subcellular location is the cytoplasm. The catalysed reaction is N(6)-dimethylallyladenosine(37) in tRNA + (sulfur carrier)-SH + AH2 + 2 S-adenosyl-L-methionine = 2-methylsulfanyl-N(6)-dimethylallyladenosine(37) in tRNA + (sulfur carrier)-H + 5'-deoxyadenosine + L-methionine + A + S-adenosyl-L-homocysteine + 2 H(+). Its function is as follows. Catalyzes the methylthiolation of N6-(dimethylallyl)adenosine (i(6)A), leading to the formation of 2-methylthio-N6-(dimethylallyl)adenosine (ms(2)i(6)A) at position 37 in tRNAs that read codons beginning with uridine. This is tRNA-2-methylthio-N(6)-dimethylallyladenosine synthase from Helicobacter pylori (strain P12).